The chain runs to 529 residues: MKPHLKQWRQRMLFGLFAGGLLFLLIFIYFTDSNPAEPVPSSLSFLETRRLLPVQGKQRAIMGAAHEPSPPGGLDARQALPRAHPAGSFHAGPGDLQKWAQSQDGFEHKEFFSSQVGRKSQSAFYPEDDDYFFAAGQPGWHSHSQGTLGFPSPGEPGPREGAFPAAQVQRRRVKKRHRRQRRSHVLEEGDDGDRLYSSMSRAFLYRLWKGNVSSKMLNPRLQKAMKDYLTANKHGVRFRGKREAGLSRAQLLCQLRSRARVRTLDGTEAPFSALGWRRLVPAVPLSQLHPRGLRSCAVVMSAGAILNSSLGEEIDSHDAVLRFNSAPTRGYEKDVGNKTTVRIINSQILTNPSHHFVDSSLYKDVILVAWDPAPYSANLNLWYKKPDYNLFTPYIQHRQRNPNQPFYILHPKFIWQLWDIIQENTKEKIQPNPPSSGFIGILIMMSMCREVHVYEYIPSVRQTELCHYHELYYDAACTLGAYHPLLYEKLLVQRLNTGTQGDLHRKGKVVLPGFQAVHCPAPSPVIPHS.

At 1-11 the chain is on the cytoplasmic side; it reads MKPHLKQWRQR. Residues 12 to 32 traverse the membrane as a helical; Signal-anchor for type II membrane protein segment; sequence MLFGLFAGGLLFLLIFIYFTD. The Lumenal portion of the chain corresponds to 33–529; sequence SNPAEPVPSS…PAPSPVIPHS (497 aa). A disordered region spans residues 142–186; sequence SHSQGTLGFPSPGEPGPREGAFPAAQVQRRRVKKRHRRQRRSHVL. Positions 169-183 are enriched in basic residues; it reads QRRRVKKRHRRQRRS. Residue Asn211 is glycosylated (N-linked (GlcNAc...) asparagine). 3 disulfides stabilise this stretch: Cys253–Cys519, Cys296–Cys448, and Cys466–Cys477.

This sequence belongs to the glycosyltransferase 29 family.

It is found in the golgi apparatus. Its subcellular location is the golgi stack membrane. The catalysed reaction is a beta-D-galactoside + CMP-N-acetyl-beta-neuraminate = an N-acetyl-alpha-neuraminyl-(2-&gt;6)-beta-D-galactosyl derivative + CMP + H(+). Transfers sialic acid from the donor of substrate CMP-sialic acid to galactose containing acceptor substrates. Has alpha-2,6-sialyltransferase activity toward oligosaccharides that have the Gal-beta-1,4-GlcNAc sequence at the non-reducing end of their carbohydrate groups, but it has weak or no activities toward glycoproteins and glycolipids. This is Beta-galactoside alpha-2,6-sialyltransferase 2 (ST6GAL2) from Pan troglodytes (Chimpanzee).